The chain runs to 161 residues: 2-C-methyl-D-erythritol 2,4-cyclodiphosphate synthase (161 aa).

Aspartate 10 and histidine 12 together coordinate a divalent metal cation. 4-CDP-2-C-methyl-D-erythritol 2-phosphate contacts are provided by residues 10–12 (DVH) and 36–37 (HS). Position 44 (histidine 44) interacts with a divalent metal cation. 4-CDP-2-C-methyl-D-erythritol 2-phosphate contacts are provided by residues 58–60 (DIG), 63–67 (FSDTD), and arginine 144.

The protein belongs to the IspF family. As to quaternary structure, homotrimer. A divalent metal cation serves as cofactor.

It catalyses the reaction 4-CDP-2-C-methyl-D-erythritol 2-phosphate = 2-C-methyl-D-erythritol 2,4-cyclic diphosphate + CMP. It functions in the pathway isoprenoid biosynthesis; isopentenyl diphosphate biosynthesis via DXP pathway; isopentenyl diphosphate from 1-deoxy-D-xylulose 5-phosphate: step 4/6. In terms of biological role, involved in the biosynthesis of isopentenyl diphosphate (IPP) and dimethylallyl diphosphate (DMAPP), two major building blocks of isoprenoid compounds. Catalyzes the conversion of 4-diphosphocytidyl-2-C-methyl-D-erythritol 2-phosphate (CDP-ME2P) to 2-C-methyl-D-erythritol 2,4-cyclodiphosphate (ME-CPP) with a corresponding release of cytidine 5-monophosphate (CMP). This is 2-C-methyl-D-erythritol 2,4-cyclodiphosphate synthase from Burkholderia ambifaria (strain MC40-6).